A 235-amino-acid polypeptide reads, in one-letter code: Phosphoribosylaminoimidazole-succinocarboxamide synthase (235 aa).

Belongs to the SAICAR synthetase family.

The catalysed reaction is 5-amino-1-(5-phospho-D-ribosyl)imidazole-4-carboxylate + L-aspartate + ATP = (2S)-2-[5-amino-1-(5-phospho-beta-D-ribosyl)imidazole-4-carboxamido]succinate + ADP + phosphate + 2 H(+). It participates in purine metabolism; IMP biosynthesis via de novo pathway; 5-amino-1-(5-phospho-D-ribosyl)imidazole-4-carboxamide from 5-amino-1-(5-phospho-D-ribosyl)imidazole-4-carboxylate: step 1/2. The chain is Phosphoribosylaminoimidazole-succinocarboxamide synthase from Clostridium perfringens (strain SM101 / Type A).